The chain runs to 136 residues: Diuretic hormone 41 (136 aa).

The N-terminal stretch at 1–26 is a signal peptide; sequence MMWWAVWCAAMVAGSVFTAAAPPTDS. The propeptide occupies 27–76; sequence IDLMQMDPSLADDESLGFAMQSLSGRYAAAPWLYLLADVSHDPQNGSDRV. At I119 the chain carries Isoleucine amide. Positions 123-136 are excised as a propeptide; the sequence is GFHWAPSAKAAKFY.

Belongs to the sauvagine/corticotropin-releasing factor/urotensin I family.

Its subcellular location is the secreted. Functionally, regulation of fluid secretion. In Bombyx mori (Silk moth), this protein is Diuretic hormone 41 (dh41).